The following is a 378-amino-acid chain: Succinate--CoA ligase [ADP-forming] subunit beta (378 aa).

In terms of domain architecture, ATP-grasp spans 9–237; the sequence is RDIVARYGIP…IAGEPESEIK (229 aa). Residues K45, 52 to 54, I94, and E99 contribute to the ATP site; that span reads GRG. N192 and D206 together coordinate Mg(2+). Substrate is bound by residues N257 and 314-316; that span reads GIT.

The protein belongs to the succinate/malate CoA ligase beta subunit family. In terms of assembly, heterotetramer of two alpha and two beta subunits. Mg(2+) is required as a cofactor.

The enzyme catalyses succinate + ATP + CoA = succinyl-CoA + ADP + phosphate. It catalyses the reaction GTP + succinate + CoA = succinyl-CoA + GDP + phosphate. Its pathway is carbohydrate metabolism; tricarboxylic acid cycle; succinate from succinyl-CoA (ligase route): step 1/1. Its function is as follows. Succinyl-CoA synthetase functions in the citric acid cycle (TCA), coupling the hydrolysis of succinyl-CoA to the synthesis of either ATP or GTP and thus represents the only step of substrate-level phosphorylation in the TCA. The beta subunit provides nucleotide specificity of the enzyme and binds the substrate succinate, while the binding sites for coenzyme A and phosphate are found in the alpha subunit. This chain is Succinate--CoA ligase [ADP-forming] subunit beta, found in Herpetosiphon aurantiacus (strain ATCC 23779 / DSM 785 / 114-95).